The primary structure comprises 557 residues: uncharacterized protein (557 aa).

The first 30 residues, 1-30 (MAPRRRRHTRIAGLRVVGTATLVAATTLTA), serve as a signal peptide directing secretion. Residue C31 is the site of N-palmitoyl cysteine attachment. C31 is lipidated: S-diacylglycerol cysteine.

To M.bovis Mb2616c and M.leprae ML0489.

It localises to the cell membrane. This is an uncharacterized protein from Mycobacterium tuberculosis (strain CDC 1551 / Oshkosh).